We begin with the raw amino-acid sequence, 440 residues long: Glycerophosphocholine cholinephosphodiesterase ENPP6 (440 aa).

Residues 1-22 (MAVKLGTLLLALALGLAQPASA) form the signal peptide. Positions 32, 71, and 92 each coordinate substrate. Residues aspartate 32 and serine 71 each coordinate Zn(2+). The active-site Nucleophile is serine 71. At serine 71 the chain carries Phosphoserine. N-linked (GlcNAc...) asparagine glycosylation is found at asparagine 100 and asparagine 118. Residues cysteine 142 and cysteine 154 are joined by a disulfide bond. Substrate is bound at residue aspartate 193. Zn(2+) is bound by residues aspartate 193, histidine 197, aspartate 240, and histidine 241. Histidine 241 provides a ligand contact to substrate. An N-linked (GlcNAc...) asparagine glycan is attached at asparagine 341. A substrate-binding site is contributed by histidine 354. A Zn(2+)-binding site is contributed by histidine 354. Asparagine 404 carries an N-linked (GlcNAc...) asparagine glycan. Alanine 418 carries the GPI-anchor amidated alanine lipid modification. Residues 419 to 440 (GTTPPVQPSHCALALILLFLLA) constitute a propeptide, removed in mature form.

Belongs to the nucleotide pyrophosphatase/phosphodiesterase family. Homodimer; disulfide-linked. Homotetramer. Zn(2+) serves as cofactor.

The protein localises to the cell membrane. The catalysed reaction is sn-glycerol 3-phosphocholine + H2O = phosphocholine + glycerol + H(+). It carries out the reaction a 1-acyl-sn-glycero-3-phosphocholine + H2O = a 1-acyl-sn-glycerol + phosphocholine + H(+). The enzyme catalyses a 1-O-alkyl-sn-glycero-3-phosphocholine + H2O = a 1-O-alkyl-sn-glycerol + phosphocholine + H(+). It catalyses the reaction 1-dodecanoyl-sn-glycero-3-phosphocholine + H2O = 1-dodecanoyl-sn-glycerol + phosphocholine + H(+). The catalysed reaction is 1-hexadecanoyl-sn-glycero-3-phosphocholine + H2O = 1-hexadecanoyl-sn-glycerol + phosphocholine + H(+). It carries out the reaction 1-(5Z,8Z,11Z,14Z-eicosatetraenoyl)-sn-glycero-3-phosphocholine + H2O = 1-(5Z,8Z,11Z,14Z-eicosatetraenoyl)-sn-glycerol + phosphocholine + H(+). The enzyme catalyses 1-tetradecanoyl-sn-glycero-3-phosphocholine + H2O = 1-tetradecanoyl-sn-glycerol + phosphocholine + H(+). It catalyses the reaction sphing-4-enine-phosphocholine + H2O = sphing-4-enine + phosphocholine + H(+). The catalysed reaction is 1-(9Z-octadecenoyl)-sn-glycero-3-phosphocholine + H2O = 1-(9Z-octadecenoyl)-sn-glycerol + phosphocholine + H(+). It carries out the reaction 1-(9Z,12Z)-octadecadienoyl-sn-glycero-3-phosphocholine + H2O = 1-(9Z,12Z-octadecadienoyl)-sn-glycerol + phosphocholine + H(+). The enzyme catalyses glycero-2-phosphocholine + H2O = phosphocholine + glycerol + H(+). Its activity is regulated as follows. Inhibited by EDTA and EGTA in vitro. In terms of biological role, choline-specific glycerophosphodiesterase that hydrolyzes glycerophosphocholine (GPC) and lysophosphatidylcholine (LPC) and contributes to supplying choline to the cells. Has a preference for LPC with short (12:0 and 14:0) or polyunsaturated (18:2 and 20:4) fatty acids. In vitro, hydrolyzes only choline-containing lysophospholipids, such as sphingosylphosphorylcholine (SPC), platelet-activating factor (PAF) and lysoPAF, but not other lysophospholipids. The protein is Glycerophosphocholine cholinephosphodiesterase ENPP6 of Pongo abelii (Sumatran orangutan).